The primary structure comprises 163 residues: Phosphopantetheine adenylyltransferase (163 aa).

Position 10 (T10) interacts with substrate. ATP contacts are provided by residues 10–11 and H18; that span reads TF. Residues K42, L74, and R88 each coordinate substrate. ATP-binding positions include 89–91, E99, and 124–130; these read GLR and NSFISST.

The protein belongs to the bacterial CoaD family. In terms of assembly, homohexamer. Mg(2+) is required as a cofactor.

It is found in the cytoplasm. The enzyme catalyses (R)-4'-phosphopantetheine + ATP + H(+) = 3'-dephospho-CoA + diphosphate. Its pathway is cofactor biosynthesis; coenzyme A biosynthesis; CoA from (R)-pantothenate: step 4/5. Reversibly transfers an adenylyl group from ATP to 4'-phosphopantetheine, yielding dephospho-CoA (dPCoA) and pyrophosphate. The sequence is that of Phosphopantetheine adenylyltransferase from Shewanella baltica (strain OS195).